The following is a 103-amino-acid chain: Viscotoxin-B (103 aa).

The signal sequence occupies residues 1–6 (FRNVES). 3 disulfide bridges follow: Cys9–Cys46, Cys10–Cys38, and Cys22–Cys32. Residues 53-103 (FYCTLGCQSSKCASITTPPNSEVDAEAVRCKAACSNLCDFGVTTNQEIQDD) constitute a propeptide, acidic domain.

It belongs to the plant thionin (TC 1.C.44) family.

The protein localises to the secreted. Thionins are small plant proteins which are toxic to animal cells. They seem to exert their toxic effect at the level of the cell membrane. Their precise function is not known. The polypeptide is Viscotoxin-B (THI2.2) (Viscum album (European mistletoe)).